The primary structure comprises 328 residues: tRNA uridine(34) hydroxylase (328 aa).

Positions 130 to 224 constitute a Rhodanese domain; sequence LDKDTVVLDT…YGKDPEVQGE (95 aa). C184 acts as the Cysteine persulfide intermediate in catalysis.

The protein belongs to the TrhO family.

The enzyme catalyses uridine(34) in tRNA + AH2 + O2 = 5-hydroxyuridine(34) in tRNA + A + H2O. Its function is as follows. Catalyzes oxygen-dependent 5-hydroxyuridine (ho5U) modification at position 34 in tRNAs. This Streptococcus pneumoniae serotype 19F (strain G54) protein is tRNA uridine(34) hydroxylase.